The chain runs to 352 residues: Protein RecA (352 aa).

67 to 74 (GPESSGKT) is a binding site for ATP. Positions 332–352 (VKPADAESKEDSPKLKAVDGF) are disordered. The segment covering 335-352 (ADAESKEDSPKLKAVDGF) has biased composition (basic and acidic residues).

It belongs to the RecA family.

The protein resides in the cytoplasm. Can catalyze the hydrolysis of ATP in the presence of single-stranded DNA, the ATP-dependent uptake of single-stranded DNA by duplex DNA, and the ATP-dependent hybridization of homologous single-stranded DNAs. It interacts with LexA causing its activation and leading to its autocatalytic cleavage. The chain is Protein RecA from Pseudarthrobacter chlorophenolicus (strain ATCC 700700 / DSM 12829 / CIP 107037 / JCM 12360 / KCTC 9906 / NCIMB 13794 / A6) (Arthrobacter chlorophenolicus).